We begin with the raw amino-acid sequence, 138 residues long: Nucleoside diphosphate kinase (138 aa).

Residues K9, F57, R85, T91, R102, and N112 each coordinate ATP. Residue H115 is the Pros-phosphohistidine intermediate of the active site.

Belongs to the NDK family. Homotetramer. Mg(2+) is required as a cofactor.

The protein resides in the cytoplasm. The catalysed reaction is a 2'-deoxyribonucleoside 5'-diphosphate + ATP = a 2'-deoxyribonucleoside 5'-triphosphate + ADP. It catalyses the reaction a ribonucleoside 5'-diphosphate + ATP = a ribonucleoside 5'-triphosphate + ADP. Major role in the synthesis of nucleoside triphosphates other than ATP. The ATP gamma phosphate is transferred to the NDP beta phosphate via a ping-pong mechanism, using a phosphorylated active-site intermediate. The polypeptide is Nucleoside diphosphate kinase (Lawsonia intracellularis (strain PHE/MN1-00)).